The following is a 218-amino-acid chain: UPF0502 protein CJA_1529 (218 aa).

It belongs to the UPF0502 family.

This is UPF0502 protein CJA_1529 from Cellvibrio japonicus (strain Ueda107) (Pseudomonas fluorescens subsp. cellulosa).